A 286-amino-acid polypeptide reads, in one-letter code: MGIHIKRWCFIILVASAAYILRDSFDPETLANTRVLVTGASTGIGEEIAYHYARAGAKLVLTARREHALQEVKSRCLELGAKNVFLVVADMASHNAREQVVAEALSALGGLDYLVLNHIGWTPFKMWDGDVNHTRWLMEVNFLSYIHLATAALPYLTQSKGSIIVLSSLTAKTPIPYTTSYAASKFALEGFFSSLRHELTMQNNPVSITLCILGLIDTQSAMEKIKDKITMSAYPASDAALAVVSAGAGRQREMYYPWFVRPLCFFRDWFPQHRDWFIQRMYHYNS.

Residues 1-17 form the signal peptide; that stretch reads MGIHIKRWCFIILVASA. NADP(+) contacts are provided by residues 39 to 65, 90 to 91, and 117 to 119; these read GAST…TARR, DM, and NHI. Ser168 contributes to the substrate binding site. Residue Tyr181 is the Proton acceptor of the active site. Residues 181–185 and 214–220 contribute to the NADP(+) site; these read YAASK and GLIDTQS.

It belongs to the short-chain dehydrogenases/reductases (SDR) family.

The protein resides in the secreted. The catalysed reaction is cortisone + NADPH + H(+) = cortisol + NADP(+). Its function is as follows. Unidirectional NADP(+)-dependent cortisol dehydrogenase (in vitro). This chain is Hydroxysteroid 11-beta-dehydrogenase 1-like protein (hsd11b1l), found in Xenopus tropicalis (Western clawed frog).